Consider the following 310-residue polypeptide: Putative S-adenosyl-L-methionine-dependent methyltransferase MMAR_0356 (310 aa).

S-adenosyl-L-methionine-binding positions include aspartate 137 and 166 to 167 (DL).

The protein belongs to the UPF0677 family.

In terms of biological role, exhibits S-adenosyl-L-methionine-dependent methyltransferase activity. The protein is Putative S-adenosyl-L-methionine-dependent methyltransferase MMAR_0356 of Mycobacterium marinum (strain ATCC BAA-535 / M).